Reading from the N-terminus, the 555-residue chain is Glutamine--tRNA ligase (555 aa).

The short motif at P34–H44 is the 'HIGH' region element. ATP contacts are provided by residues E35–N37 and H41–S47. The L-glutamine site is built by D67 and Y212. Residues T231, R261–L262, and L269–K271 contribute to the ATP site. The 'KMSKS' region signature appears at V268–R272.

Belongs to the class-I aminoacyl-tRNA synthetase family. As to quaternary structure, monomer.

It localises to the cytoplasm. It carries out the reaction tRNA(Gln) + L-glutamine + ATP = L-glutaminyl-tRNA(Gln) + AMP + diphosphate. The polypeptide is Glutamine--tRNA ligase (Alteromonas mediterranea (strain DSM 17117 / CIP 110805 / LMG 28347 / Deep ecotype)).